The sequence spans 291 residues: tRNA N(3)-cytidine methyltransferase METTL8, mitochondrial (291 aa).

Residues 1–21 constitute a mitochondrion transit peptide; it reads MNMIWRNSISCLRLGKVPHRY. Lys80 is covalently cross-linked (Glycyl lysine isopeptide (Lys-Gly) (interchain with G-Cter in SUMO)). S-adenosyl-L-methionine contacts are provided by Trp89 and Tyr93. A disordered region spans residues 141–187; sequence FSRMHCPTVPDEKNHYEKSSGSSEGQSKTESDFSNLDSEKHKKGPME. The span at 159-168 shows a compositional bias: low complexity; sequence SSGSSEGQSK. S-adenosyl-L-methionine-binding residues include Gly204, Asp230, and Asp256.

Belongs to the methyltransferase superfamily. METL family. As to quaternary structure, interacts with EP300.

The protein resides in the mitochondrion. It carries out the reaction cytidine(32) in tRNA(Ser) + S-adenosyl-L-methionine = N(3)-methylcytidine(32) in tRNA(Ser) + S-adenosyl-L-homocysteine + H(+). The enzyme catalyses cytidine(32) in tRNA(Thr) + S-adenosyl-L-methionine = N(3)-methylcytidine(32) in tRNA(Thr) + S-adenosyl-L-homocysteine + H(+). It catalyses the reaction a cytidine in mRNA + S-adenosyl-L-methionine = an N(3)-methylcytidine in mRNA + S-adenosyl-L-homocysteine + H(+). Functionally, mitochondrial S-adenosyl-L-methionine-dependent methyltransferase that mediates N(3)-methylcytidine modification of residue 32 of the tRNA anticodon loop of mitochondrial tRNA(Ser)(UCN) and tRNA(Thr). N(3)-methylcytidine methylation modification regulates mitochondrial translation efficiency and is required for activity of the respiratory chain. N(3)-methylcytidine methylation of mitochondrial tRNA(Ser)(UCN) requires the formation of N(6)-dimethylallyladenosine(37) (i6A37) by TRIT1 as prerequisite. May also mediate N(3)-methylcytidine modification of mRNAs. The existence of N(3)-methylcytidine modification on mRNAs is however unclear, and additional evidences are required to confirm the role of the N(3)-methylcytidine-specific mRNA methyltransferase activity of METTL8 in vivo. The sequence is that of tRNA N(3)-cytidine methyltransferase METTL8, mitochondrial from Homo sapiens (Human).